The sequence spans 271 residues: Type III pantothenate kinase (271 aa).

Residue 6–13 coordinates ATP; sequence DVRNTHTV. 109–112 contacts substrate; that stretch reads GADR. Asp111 (proton acceptor) is an active-site residue. Position 131 (Asp131) interacts with K(+). Ser134 provides a ligand contact to ATP. A substrate-binding site is contributed by Thr186.

This sequence belongs to the type III pantothenate kinase family. As to quaternary structure, homodimer. NH4(+) serves as cofactor. It depends on K(+) as a cofactor.

Its subcellular location is the cytoplasm. It catalyses the reaction (R)-pantothenate + ATP = (R)-4'-phosphopantothenate + ADP + H(+). The protein operates within cofactor biosynthesis; coenzyme A biosynthesis; CoA from (R)-pantothenate: step 1/5. Functionally, catalyzes the phosphorylation of pantothenate (Pan), the first step in CoA biosynthesis. The polypeptide is Type III pantothenate kinase (Mycobacterium avium (strain 104)).